The sequence spans 475 residues: Ammonium transporter 2 (475 aa).

Helical transmembrane passes span 27 to 47 (AATL…ASIV), 55 to 75 (SAFM…LLCY), 120 to 140 (LVYF…GSVL), 148 to 168 (WMAF…YSIW), 183 to 203 (GGYV…YWVG), 218 to 238 (VLLM…FNGG), 254 to 274 (TNLS…IFFG), 279 to 299 (IGAI…AGLI), 302 to 322 (WAAI…MMII), 336 to 356 (LAVF…TGLF), and 389 to 409 (AGAA…LLAI).

The protein belongs to the ammonia transporter channel (TC 1.A.11.2) family. As to expression, higher expression in shoots than roots.

Its subcellular location is the cell membrane. Its function is as follows. High affinity ammonium transporter that may play an important role in moving ammonium between the apoplast and symplast of cells throughout the plant. Does not transport methylammonium. The sequence is that of Ammonium transporter 2 (AMT2) from Arabidopsis thaliana (Mouse-ear cress).